The sequence spans 374 residues: CMP-N-acetylneuraminate-beta-1,4-galactoside alpha-2,3-sialyltransferase (374 aa).

The Cytoplasmic segment spans residues 1 to 8; it reads MGLLVFVR. The chain crosses the membrane as a helical; Signal-anchor for type II membrane protein span at residues 9 to 28; that stretch reads NLLLALCLFLVLGFLYYSAW. The Lumenal portion of the chain corresponds to 29 to 374; it reads KLHLLQWEDS…RVITDLSSGI (346 aa). Asn-79 and Asn-170 each carry an N-linked (GlcNAc...) asparagine glycan. Cys-159 and Cys-313 form a disulfide bridge.

This sequence belongs to the glycosyltransferase 29 family. As to expression, found in all tissues tested. High expression found in brain, liver, kidney, colon, heart and spleen.

The protein resides in the membrane. It localises to the golgi apparatus. The protein localises to the golgi stack membrane. It carries out the reaction a beta-D-galactosyl-(1-&gt;4)-N-acetyl-beta-D-glucosaminyl derivative + CMP-N-acetyl-beta-neuraminate = an N-acetyl-alpha-neuraminyl-(2-&gt;3)-beta-D-galactosyl-(1-&gt;4)-N-acetyl-beta-D-glucosaminyl derivative + CMP + H(+). Its pathway is protein modification; protein glycosylation. Its function is as follows. Catalyzes the formation of the NeuAc-alpha-2,3-Gal-beta-1,4-GlcNAc-, NeuAc-alpha-2,3-Gal-beta-1,3-GlcNAc- and NeuAc-alpha-2,3-Gal-beta-1,3-GalNAc- sequences found in terminal carbohydrate groups of glycoproteins and glycolipids. The highest activity is toward Gal-beta-1,3-GlcNAc and the lowest toward Gal-beta-1,3-GalNAc. The sequence is that of CMP-N-acetylneuraminate-beta-1,4-galactoside alpha-2,3-sialyltransferase (St3gal3) from Mus musculus (Mouse).